Here is a 165-residue protein sequence, read N- to C-terminus: Myosin regulatory light chain 2, ventricular/cardiac muscle isoform (165 aa).

S2 carries the n,N,N-trimethylserine modification. N14 carries the deamidated asparagine modification. Phosphoserine is present on residues S15 and S19. 3 EF-hand domains span residues 24–59, 94–129, and 130–165; these read TQIQ…LGRV, DPEE…QAER, and FSKD…GEEK. Residues D37, N39, D41, and D48 each coordinate Ca(2+). At T52 the chain carries Phosphothreonine.

In terms of assembly, myosin is a hexamer of 2 heavy chains and 4 light chains. Interacts with MYOC. In terms of processing, N-terminus is methylated by METTL11A/NTM1. Phosphorylated by MYLK3 and MYLK2; promotes cardiac muscle contraction and function. Dephosphorylated by PPP1CB complexed to PPP1R12B. The phosphorylated form in adult is expressed as gradients across the heart from endocardium (low phosphorylation) to epicardium (high phosphorylation); regulates cardiac torsion and workload distribution.

It localises to the cytoplasm. It is found in the myofibril. Its subcellular location is the sarcomere. The protein localises to the a band. Its function is as follows. Contractile protein that plays a role in heart development and function. Following phosphorylation, plays a role in cross-bridge cycling kinetics and cardiac muscle contraction by increasing myosin lever arm stiffness and promoting myosin head diffusion; as a consequence of the increase in maximum contraction force and calcium sensitivity of contraction force. These events altogether slow down myosin kinetics and prolong duty cycle resulting in accumulated myosins being cooperatively recruited to actin binding sites to sustain thin filament activation as a means to fine-tune myofilament calcium sensitivity to force. During cardiogenesis plays an early role in cardiac contractility by promoting cardiac myofibril assembly. This Oryctolagus cuniculus (Rabbit) protein is Myosin regulatory light chain 2, ventricular/cardiac muscle isoform.